A 682-amino-acid chain; its full sequence is Potassium-transporting ATPase ATP-binding subunit (682 aa).

The next 4 helical transmembrane spans lie at 34–54 (PVMF…LAMV), 58–78 (IAGS…TVLF), 219–239 (IALT…TATL), and 254–274 (VLVA…LSAI). D307 serves as the catalytic 4-aspartylphosphate intermediate. Residues D344, E348, 377-384 (FTAQSRMS), and K395 each bind ATP. Mg(2+) is bound by residues D518 and D522. 3 helical membrane passes run 588–608 (FAII…LNVM), 616–636 (AILS…PLAL), and 662–682 (LVVP…LGLA).

The protein belongs to the cation transport ATPase (P-type) (TC 3.A.3) family. Type IA subfamily. In terms of assembly, the system is composed of three essential subunits: KdpA, KdpB and KdpC.

It localises to the cell inner membrane. It catalyses the reaction K(+)(out) + ATP + H2O = K(+)(in) + ADP + phosphate + H(+). Its function is as follows. Part of the high-affinity ATP-driven potassium transport (or Kdp) system, which catalyzes the hydrolysis of ATP coupled with the electrogenic transport of potassium into the cytoplasm. This subunit is responsible for energy coupling to the transport system and for the release of the potassium ions to the cytoplasm. This Salmonella paratyphi B (strain ATCC BAA-1250 / SPB7) protein is Potassium-transporting ATPase ATP-binding subunit.